Consider the following 417-residue polypeptide: NADH-quinone oxidoreductase subunit D (417 aa).

This sequence belongs to the complex I 49 kDa subunit family. In terms of assembly, NDH-1 is composed of 14 different subunits. Subunits NuoB, C, D, E, F, and G constitute the peripheral sector of the complex.

Its subcellular location is the cell inner membrane. The catalysed reaction is a quinone + NADH + 5 H(+)(in) = a quinol + NAD(+) + 4 H(+)(out). In terms of biological role, NDH-1 shuttles electrons from NADH, via FMN and iron-sulfur (Fe-S) centers, to quinones in the respiratory chain. The immediate electron acceptor for the enzyme in this species is believed to be ubiquinone. Couples the redox reaction to proton translocation (for every two electrons transferred, four hydrogen ions are translocated across the cytoplasmic membrane), and thus conserves the redox energy in a proton gradient. The sequence is that of NADH-quinone oxidoreductase subunit D from Alkalilimnicola ehrlichii (strain ATCC BAA-1101 / DSM 17681 / MLHE-1).